Consider the following 665-residue polypeptide: Probable arginine--tRNA ligase, cytoplasmic (665 aa).

Residues 204 to 206 (SPN), H215, Y390, D394, and Q418 contribute to the L-arginine site. Residues 205 to 216 (PNIAKQMHVGHL) carry the 'HIGH' region motif. The interaction with tRNA stretch occupies residues 535-549 (NTAVYLLYTYTRICS).

Belongs to the class-I aminoacyl-tRNA synthetase family.

The protein resides in the cytoplasm. It localises to the cytosol. The enzyme catalyses tRNA(Arg) + L-arginine + ATP = L-arginyl-tRNA(Arg) + AMP + diphosphate. Functionally, forms part of a macromolecular complex that catalyzes the attachment of specific amino acids to cognate tRNAs during protein synthesis. The chain is Probable arginine--tRNA ligase, cytoplasmic from Drosophila melanogaster (Fruit fly).